We begin with the raw amino-acid sequence, 512 residues long: ADP,ATP carrier protein 4 (512 aa).

Transmembrane regions (helical) follow at residues 34–54, 71–91, 102–122, 157–177, 192–212, 231–251, 296–316, 330–350, 361–381, 390–410, and 476–496; these read ISKFLFITLLMFCILFIQNLI, ISFLKFWGVMPSAFLITVIYV, IFYLIISIFLTFFALFAYVIF, FSLFYIIAELWPNVVFALLFW, FYPLFGLLSQTGIYLAGHFLE, FHTLSIQIILTIVLILGIVSI, LIATLLICYGIAINLVEGPWK, AAFIGSYLSYTGVFTIFFVLL, FTSAVITPSIVFITGILFFAV, LIIANFILTDPALVAITIGAI, and SISICLMIIFILTCVTWIWAT.

It belongs to the ADP/ATP translocase tlc family.

The protein localises to the cell membrane. Its function is as follows. Provides the rickettsial cell with host ATP in exchange for rickettsial ADP. This is an obligate exchange system. This energy acquiring activity is an important component of rickettsial parasitism. The protein is ADP,ATP carrier protein 4 (tlcD) of Rickettsia prowazekii (strain Madrid E).